Reading from the N-terminus, the 180-residue chain is MRARALQHFLRSGGVIAYPTESCFGLGCDPTNHRALKRLLRIKGRPQRKGLIVIAQHFSQLQKLIAPVTPEQKQRMFTRWPGPHTWLVPASRRCPALLRGRHTSLAVRVTANPLAANLCRHAGMALVSTSANHNGRVPAKTARECHRLFGGRVKVLPGRTGGASKPSTIQDLITGAIVRP.

A YrdC-like domain is found at 1–180 (MRARALQHFL…DLITGAIVRP (180 aa)).

It belongs to the SUA5 family. TsaC subfamily.

It is found in the cytoplasm. It carries out the reaction L-threonine + hydrogencarbonate + ATP = L-threonylcarbamoyladenylate + diphosphate + H2O. In terms of biological role, required for the formation of a threonylcarbamoyl group on adenosine at position 37 (t(6)A37) in tRNAs that read codons beginning with adenine. Catalyzes the conversion of L-threonine, HCO(3)(-)/CO(2) and ATP to give threonylcarbamoyl-AMP (TC-AMP) as the acyladenylate intermediate, with the release of diphosphate. This Methylobacillus flagellatus (strain ATCC 51484 / DSM 6875 / VKM B-1610 / KT) protein is Threonylcarbamoyl-AMP synthase.